The chain runs to 78 residues: Large ribosomal subunit protein uL29 (78 aa).

It belongs to the universal ribosomal protein uL29 family.

This is Large ribosomal subunit protein uL29 from Rhodococcus erythropolis (strain PR4 / NBRC 100887).